The following is a 395-amino-acid chain: Zinc finger protein 385D (395 aa).

3 Matrin-type zinc fingers span residues 80-110, 204-234, and 267-297; these read ISCN…KLKA, LYCS…MLEA, and FHCE…RASG. Residues 282–308 form a disordered region; sequence LKQHISSRRHKDRASGKPPKPKYSPYN.

Its subcellular location is the nucleus. In Rattus norvegicus (Rat), this protein is Zinc finger protein 385D (Znf385d).